Reading from the N-terminus, the 381-residue chain is Alkanesulfonate monooxygenase (381 aa).

Belongs to the SsuD family. Homotetramer.

It catalyses the reaction an alkanesulfonate + FMNH2 + O2 = an aldehyde + FMN + sulfite + H2O + 2 H(+). Its function is as follows. Catalyzes the desulfonation of aliphatic sulfonates. This is Alkanesulfonate monooxygenase from Escherichia coli O6:H1 (strain CFT073 / ATCC 700928 / UPEC).